Here is a 154-residue protein sequence, read N- to C-terminus: Xanthine-guanine phosphoribosyltransferase (154 aa).

Residues 38 to 39, Lys71, and 90 to 98 contribute to the 5-phospho-alpha-D-ribose 1-diphosphate site; these read RG and DDLVDTGGT. Residue Lys71 participates in GMP binding. A Mg(2+)-binding site is contributed by Asp91. Positions 94 and 137 each coordinate guanine. Xanthine contacts are provided by Asp94 and Ile137. GMP contacts are provided by residues 94–98 and 136–137; these read DTGGT and WI.

It belongs to the purine/pyrimidine phosphoribosyltransferase family. XGPT subfamily. As to quaternary structure, homotetramer. It depends on Mg(2+) as a cofactor.

Its subcellular location is the cell inner membrane. It carries out the reaction GMP + diphosphate = guanine + 5-phospho-alpha-D-ribose 1-diphosphate. The catalysed reaction is XMP + diphosphate = xanthine + 5-phospho-alpha-D-ribose 1-diphosphate. The enzyme catalyses IMP + diphosphate = hypoxanthine + 5-phospho-alpha-D-ribose 1-diphosphate. Its pathway is purine metabolism; GMP biosynthesis via salvage pathway; GMP from guanine: step 1/1. It participates in purine metabolism; XMP biosynthesis via salvage pathway; XMP from xanthine: step 1/1. Purine salvage pathway enzyme that catalyzes the transfer of the ribosyl-5-phosphate group from 5-phospho-alpha-D-ribose 1-diphosphate (PRPP) to the N9 position of the 6-oxopurines guanine and xanthine to form the corresponding ribonucleotides GMP (guanosine 5'-monophosphate) and XMP (xanthosine 5'-monophosphate), with the release of PPi. To a lesser extent, also acts on hypoxanthine. In Buchnera aphidicola subsp. Schizaphis graminum (strain Sg), this protein is Xanthine-guanine phosphoribosyltransferase.